We begin with the raw amino-acid sequence, 553 residues long: Protein PALS2 (553 aa).

L27 domains are found at residues 1–48 (MQQV…EDSK) and 49–107 (LEAV…YDSP). In terms of domain architecture, PDZ spans 129 to 208 (ILGIHKKAGE…SVTLKILPSY (80 aa)). The SH3 domain maps to 228-297 (VRQVFVKCHF…PSQFLEEKRK (70 aa)). Positions 351–538 (RKTLVLIGAQ…AFEKLQTAIE (188 aa)) constitute a Guanylate kinase-like domain. Tyr-513 is modified (phosphotyrosine).

This sequence belongs to the MAGUK family. In terms of assembly, interacts with CADM1. Interacts with the LIN7 proteins.

The protein resides in the membrane. The protein is Protein PALS2 of Mus musculus (Mouse).